The following is a 465-amino-acid chain: WASH complex subunit 1 (465 aa).

The tract at residues methionine 1–glutamine 54 is required for WASH complex assembly. The interval methionine 1 to isoleucine 167 is WHD1. A Glycyl lysine isopeptide (Lys-Gly) (interchain with G-Cter in ubiquitin) cross-link involves residue lysine 220. 3 disordered regions span residues glutamine 297 to serine 359, glycine 376 to histidine 407, and isoleucine 423 to serine 465. Positions threonine 302–proline 314 are enriched in pro residues. A VCA region spans residues glutamine 349–serine 465. In terms of domain architecture, WH2 spans glycine 361 to methionine 383. The span at serine 382–glutamine 398 shows a compositional bias: basic and acidic residues. The span at serine 424–glycine 436 shows a compositional bias: gly residues. Acidic residues predominate over residues alanine 456–serine 465.

Belongs to the WASH1 family. As to quaternary structure, component of the WASH core complex also described as WASH regulatory complex (SHRC) composed of WASH (WASHC1, WASH2P or WASH3P), WASHC2 (WASHC2A or WASHC2C), WASHC3, WASHC4 and WASHC5. The WASH core complex associates via WASHC2 with the F-actin-capping protein dimer (formed by CAPZA1, CAPZA2 or CAPZA3 and CAPZB) in a transient or substoichiometric manner which was initially described as WASH complex. Interacts (via WHD1 region) with WASHC2C; the interaction is direct. Interacts with VPS35; mediates the association with the retromer CSC complex. Interacts with FKBP15. Interacts with alpha-tubulin. Interacts with BECN1; this interaction can be competed out by AMBRA1 binding. Interacts with BLOC1S2; may associate with the BLOC-1 complex. Interacts with tubulin gamma chain (TUBG1 or TUBG2). Interacts with EXOC1, EXOC4, EXOC8; in MMP14-positive endosomes in breast tumor cells; indicative for an association with the exocyst complex. Interacts with TBC1D23. Post-translationally, ubiquitinated at Lys-220 via 'Lys-63'-linked ubiquitin chains by the TRIM27:MAGEL2 E3 ubiquitin ligase complex, leading to promote endosomal F-actin assembly.

The protein localises to the early endosome membrane. Its subcellular location is the recycling endosome membrane. The protein resides in the late endosome. It localises to the cytoplasmic vesicle. It is found in the autophagosome. The protein localises to the cytoplasm. Its subcellular location is the cytoskeleton. The protein resides in the microtubule organizing center. It localises to the centrosome. It is found in the centriole. Its function is as follows. Acts as a component of the WASH core complex that functions as a nucleation-promoting factor (NPF) at the surface of endosomes, where it recruits and activates the Arp2/3 complex to induce actin polymerization, playing a key role in the fission of tubules that serve as transport intermediates during endosome sorting. Involved in endocytic trafficking of EGF. Involved in transferrin receptor recycling. Regulates the trafficking of endosomal alpha5beta1 integrin to the plasma membrane and involved in invasive cell migration. In T-cells involved in endosome-to-membrane recycling of receptors including T-cell receptor (TCR), CD28 and ITGAL; proposed to be implicated in T cell proliferation and effector function. In dendritic cells involved in endosome-to-membrane recycling of major histocompatibility complex (MHC) class II probably involving retromer and subsequently allowing antigen sampling, loading and presentation during T-cell activation. Involved in Arp2/3 complex-dependent actin assembly driving Salmonella typhimurium invasion independent of ruffling. Involved in the exocytosis of MMP14 leading to matrix remodeling during invasive migration and implicating late endosome-to-plasma membrane tubular connections and cooperation with the exocyst complex. Involved in negative regulation of autophagy independently from its role in endosomal sorting by inhibiting BECN1 ubiquitination to inactivate PIK3C3/Vps34 activity. The protein is WASH complex subunit 1 of Homo sapiens (Human).